A 406-amino-acid polypeptide reads, in one-letter code: uncharacterized protein (406 aa).

A disordered region spans residues 1-36; sequence MDRVRSLIGNRRGRRHNRQHPPYPHSGSPSTVNLLG.

It to yeast YMR316w.

This is an uncharacterized protein from Saccharomyces cerevisiae (strain ATCC 204508 / S288c) (Baker's yeast).